The chain runs to 151 residues: Large ribosomal subunit protein uL15 (151 aa).

A disordered region spans residues 1 to 60 (MAENNPLKIHNLRPAPGAKTAKTRVGRGEASKGKTAGRGTKGTKARYQVPERFEGGQMPL).

Belongs to the universal ribosomal protein uL15 family. In terms of assembly, part of the 50S ribosomal subunit.

In terms of biological role, binds to the 23S rRNA. This is Large ribosomal subunit protein uL15 from Streptomyces avermitilis (strain ATCC 31267 / DSM 46492 / JCM 5070 / NBRC 14893 / NCIMB 12804 / NRRL 8165 / MA-4680).